Here is a 372-residue protein sequence, read N- to C-terminus: Cytochrome b (372 aa).

4 helical membrane-spanning segments follow: residues 25–45, 69–90, 105–125, and 170–190; these read FGSM…FLAI, WIMQ…YIHI, WLSG…GYVL, and FFAL…IHIM. Heme b contacts are provided by histidine 75 and histidine 89. Histidine 174 and histidine 188 together coordinate heme b. An a ubiquinone-binding site is contributed by histidine 193. A run of 4 helical transmembrane segments spans residues 218–238, 280–300, 312–332, and 339–358; these read HKDI…MTLT, LGGT…PFTH, LTQL…WAAT, and FTMI…IMNP.

Belongs to the cytochrome b family. The cytochrome bc1 complex contains 3 respiratory subunits (MT-CYB, CYC1 and UQCRFS1), 2 core proteins (UQCRC1 and UQCRC2) and probably 6 low-molecular weight proteins. Heme b serves as cofactor.

The protein resides in the mitochondrion inner membrane. Component of the ubiquinol-cytochrome c reductase complex (complex III or cytochrome b-c1 complex) that is part of the mitochondrial respiratory chain. The b-c1 complex mediates electron transfer from ubiquinol to cytochrome c. Contributes to the generation of a proton gradient across the mitochondrial membrane that is then used for ATP synthesis. The chain is Cytochrome b (MT-CYB) from Lycodon semicarinatus (Ryukyu odd-tooth snake).